The primary structure comprises 183 residues: Photosystem I assembly protein Ycf3 (183 aa).

TPR repeat units lie at residues 35–68 (AFIYYRDGMSAQSEGEYAEALGSYYKAMRLEIDS), 72–105 (SYILYNIGLIHTSNGNHAKALEYYFQALERNSFL), and 120–153 (GEQAIYQGDLEISEAWFDQAAEYWRRAIALSPDN).

The protein belongs to the Ycf3 family.

It is found in the plastid. The protein resides in the chloroplast thylakoid membrane. Functionally, essential for the assembly of the photosystem I (PSI) complex. May act as a chaperone-like factor to guide the assembly of the PSI subunits. This Adiantum capillus-veneris (Maidenhair fern) protein is Photosystem I assembly protein Ycf3.